The sequence spans 311 residues: Aspartate carbamoyltransferase catalytic subunit (311 aa).

Carbamoyl phosphate-binding residues include Arg58 and Thr59. Lys86 contacts L-aspartate. 3 residues coordinate carbamoyl phosphate: Arg108, His136, and Gln139. L-aspartate contacts are provided by Arg169 and Arg223. Residues Gly264 and Pro265 each coordinate carbamoyl phosphate.

This sequence belongs to the aspartate/ornithine carbamoyltransferase superfamily. ATCase family. Heterododecamer (2C3:3R2) of six catalytic PyrB chains organized as two trimers (C3), and six regulatory PyrI chains organized as three dimers (R2).

It carries out the reaction carbamoyl phosphate + L-aspartate = N-carbamoyl-L-aspartate + phosphate + H(+). It functions in the pathway pyrimidine metabolism; UMP biosynthesis via de novo pathway; (S)-dihydroorotate from bicarbonate: step 2/3. Functionally, catalyzes the condensation of carbamoyl phosphate and aspartate to form carbamoyl aspartate and inorganic phosphate, the committed step in the de novo pyrimidine nucleotide biosynthesis pathway. This is Aspartate carbamoyltransferase catalytic subunit from Desulfosudis oleivorans (strain DSM 6200 / JCM 39069 / Hxd3) (Desulfococcus oleovorans).